Here is a 304-residue protein sequence, read N- to C-terminus: Porphobilinogen deaminase (304 aa).

The residue at position 240 (cysteine 240) is an S-(dipyrrolylmethanemethyl)cysteine.

It belongs to the HMBS family. In terms of assembly, monomer. The cofactor is dipyrromethane.

It catalyses the reaction 4 porphobilinogen + H2O = hydroxymethylbilane + 4 NH4(+). Its pathway is porphyrin-containing compound metabolism; protoporphyrin-IX biosynthesis; coproporphyrinogen-III from 5-aminolevulinate: step 2/4. In terms of biological role, tetrapolymerization of the monopyrrole PBG into the hydroxymethylbilane pre-uroporphyrinogen in several discrete steps. The chain is Porphobilinogen deaminase from Xanthomonas campestris pv. campestris (strain B100).